We begin with the raw amino-acid sequence, 40 residues long: MMSEPGRIPLWLVALVAGTGVLVVVGLFFYGSYVGVGSSL.

A helical membrane pass occupies residues 8–28 (IPLWLVALVAGTGVLVVVGLF).

The protein belongs to the PsbJ family. As to quaternary structure, PSII is composed of 1 copy each of membrane proteins PsbA, PsbB, PsbC, PsbD, PsbE, PsbF, PsbH, PsbI, PsbJ, PsbK, PsbL, PsbM, PsbT, PsbX, PsbY, PsbZ, Psb30/Ycf12, peripheral proteins PsbO, CyanoQ (PsbQ), PsbU, PsbV and a large number of cofactors. It forms dimeric complexes.

Its subcellular location is the cellular thylakoid membrane. One of the components of the core complex of photosystem II (PSII). PSII is a light-driven water:plastoquinone oxidoreductase that uses light energy to abstract electrons from H(2)O, generating O(2) and a proton gradient subsequently used for ATP formation. It consists of a core antenna complex that captures photons, and an electron transfer chain that converts photonic excitation into a charge separation. In Trichodesmium erythraeum (strain IMS101), this protein is Photosystem II reaction center protein J.